The sequence spans 113 residues: MRLISLLLFVLLLAIQYPLWLGKGGWLRVWDLNRQVNEQTVHNQALKLRNAKLEGEVKDLQDGTGAIEERARYELGMVKDGEVFVQFVAPAPKVSATPPLPPPPNSVAGRGGH.

Residues 1-3 are Cytoplasmic-facing; it reads MRL. The chain crosses the membrane as a helical span at residues 4 to 21; the sequence is ISLLLFVLLLAIQYPLWL. Residues 22–113 are Periplasmic-facing; the sequence is GKGGWLRVWD…PNSVAGRGGH (92 aa). Residues 34–64 adopt a coiled-coil conformation; it reads RQVNEQTVHNQALKLRNAKLEGEVKDLQDGT. Residues 93 to 113 form a disordered region; the sequence is KVSATPPLPPPPNSVAGRGGH.

Belongs to the FtsB family. As to quaternary structure, part of a complex composed of FtsB, FtsL and FtsQ.

The protein localises to the cell inner membrane. Functionally, essential cell division protein. May link together the upstream cell division proteins, which are predominantly cytoplasmic, with the downstream cell division proteins, which are predominantly periplasmic. The protein is Cell division protein FtsB of Cupriavidus metallidurans (strain ATCC 43123 / DSM 2839 / NBRC 102507 / CH34) (Ralstonia metallidurans).